The primary structure comprises 225 residues: Cytidylate kinase (225 aa).

An ATP-binding site is contributed by 11 to 19; that stretch reads GPAAAGKST.

The protein belongs to the cytidylate kinase family. Type 1 subfamily.

It is found in the cytoplasm. It catalyses the reaction CMP + ATP = CDP + ADP. The catalysed reaction is dCMP + ATP = dCDP + ADP. The chain is Cytidylate kinase from Bacillus cereus (strain B4264).